We begin with the raw amino-acid sequence, 357 residues long: Peptide chain release factor 1 (357 aa).

The residue at position 234 (Gln-234) is an N5-methylglutamine. Basic and acidic residues predominate over residues 284–307 (KKQEQRSNDRKQQVGSGDRSERIR). The segment at 284 to 313 (KKQEQRSNDRKQQVGSGDRSERIRTYNFPQ) is disordered.

This sequence belongs to the prokaryotic/mitochondrial release factor family. Post-translationally, methylated by PrmC. Methylation increases the termination efficiency of RF1.

The protein resides in the cytoplasm. In terms of biological role, peptide chain release factor 1 directs the termination of translation in response to the peptide chain termination codons UAG and UAA. The polypeptide is Peptide chain release factor 1 (Borrelia turicatae (strain 91E135)).